The sequence spans 463 residues: D(5)-like dopamine receptor (463 aa).

Residues 1–39 (MENFYNETEPTEPRGGVDPLRVVTAAEDVPAPVGGVSVR) are Extracellular-facing. Residue Asn6 is glycosylated (N-linked (GlcNAc...) asparagine). Residues 40 to 65 (ALTGCVLCALIVSTLLGNTLVCAAVI) traverse the membrane as a helical segment. Topologically, residues 66–76 (KFRHLRSKVTN) are cytoplasmic. A helical transmembrane segment spans residues 77 to 103 (AFVVSLAVSDLFVAVLVMPWRAVSEVA). Topologically, residues 104–112 (GVWLFGRFC) are extracellular. Residues Cys112 and Cys194 are joined by a disulfide bond. A helical transmembrane segment spans residues 113–135 (DTWVAFDIMCSTASILNLCVISM). At 136 to 154 (DRYWAISNPFRYERRMTRR) the chain is on the cytoplasmic side. The helical transmembrane segment at 155–180 (FAFLMIAVAWTLSVLISFIPVQLNWH) threads the bilayer. Residues 181 to 198 (RADNNSSAHEQGDCNASL) lie on the Extracellular side of the membrane. A helical transmembrane segment spans residues 199–223 (NRTYAISSSLISFYIPVLIMVGTYT). Residues 224-273 (RIFRIAQTQIRRISSLERAAGQRAQNQSHRASTHDESALKTSFKRETKVL) are Cytoplasmic-facing. The helical transmembrane segment at 274 to 301 (KTLSVIMGVFVFCWLPFFVLNCVVPFCD) threads the bilayer. Residues 302–315 (VDKVGEPPCVSDTT) are Extracellular-facing. The chain crosses the membrane as a helical span at residues 316–337 (FNIFVWFGWANSSLNPVIYAFN). The Cytoplasmic portion of the chain corresponds to 338–463 (ADFRKAFTTI…PGQIQDLGDL (126 aa)).

It belongs to the G-protein coupled receptor 1 family.

It is found in the cell membrane. Functionally, receptor for dopamine. This is D(5)-like dopamine receptor (dl) from Takifugu rubripes (Japanese pufferfish).